The sequence spans 480 residues: Adenosylhomocysteinase (480 aa).

Residues T63, D142, and E203 each contribute to the substrate site. 204-206 lines the NAD(+) pocket; it reads TTT. Substrate-binding residues include K233 and D237. NAD(+) is bound by residues N238, 267 to 272, E290, N325, 346 to 348, and N394; these read GYGDVG and IGH.

It belongs to the adenosylhomocysteinase family. NAD(+) is required as a cofactor.

The protein resides in the cytoplasm. The enzyme catalyses S-adenosyl-L-homocysteine + H2O = L-homocysteine + adenosine. It functions in the pathway amino-acid biosynthesis; L-homocysteine biosynthesis; L-homocysteine from S-adenosyl-L-homocysteine: step 1/1. Functionally, may play a key role in the regulation of the intracellular concentration of adenosylhomocysteine. The chain is Adenosylhomocysteinase from Xylella fastidiosa (strain Temecula1 / ATCC 700964).